A 147-amino-acid polypeptide reads, in one-letter code: Hemoglobin subunit gamma-1 (147 aa).

Positions 3-147 (NFTAEDKAAI…VASALGSRYH (145 aa)) constitute a Globin domain. Thr13 is modified (phosphothreonine). A phosphoserine mark is found at Ser45, Ser51, and Ser53. An N6-acetyllysine modification is found at Lys60. Position 64 (His64) interacts with heme b. Lys83 carries the post-translational modification N6-acetyllysine. Position 93 (His93) interacts with heme b. Cys94 is subject to S-nitrosocysteine. Ser140 bears the Phosphoserine mark.

This sequence belongs to the globin family. In terms of assembly, heterotetramer of two alpha chains and two gamma chains in fetal hemoglobin (Hb F). Red blood cells.

Functionally, gamma chains make up the fetal hemoglobin F, in combination with alpha chains. The sequence is that of Hemoglobin subunit gamma-1 (HBG1) from Sapajus apella (Brown-capped capuchin).